The following is a 194-amino-acid chain: GTP cyclohydrolase 1 (194 aa).

Zn(2+) contacts are provided by Cys-85, His-88, and Cys-156.

Belongs to the GTP cyclohydrolase I family. As to quaternary structure, toroid-shaped homodecamer, composed of two pentamers of five dimers.

The enzyme catalyses GTP + H2O = 7,8-dihydroneopterin 3'-triphosphate + formate + H(+). It participates in cofactor biosynthesis; 7,8-dihydroneopterin triphosphate biosynthesis; 7,8-dihydroneopterin triphosphate from GTP: step 1/1. In Bacteroides fragilis (strain YCH46), this protein is GTP cyclohydrolase 1.